Reading from the N-terminus, the 113-residue chain is U11-theraphotoxin-Hhn1a (113 aa).

Positions 1 to 21 (MNTVRATFLLVFVLAVSLGQA) are cleaved as a signal peptide. Residues 22-74 (DKDENRMEMQEKTEQGKSYLDFAENLLLQKLEELEAKLLEEDSEESRNSRQKR) constitute a propeptide that is removed on maturation. Basic and acidic residues predominate over residues 60–69 (LEEDSEESRN). The disordered stretch occupies residues 60–82 (LEEDSEESRNSRQKRCIGEGVPC). 3 cysteine pairs are disulfide-bonded: cysteine 75–cysteine 90, cysteine 82–cysteine 95, and cysteine 89–cysteine 110.

This sequence belongs to the neurotoxin 14 (magi-1) family. 01 (HNTX-16) subfamily. Expressed by the venom gland.

The protein localises to the secreted. In terms of biological role, probable ion channel inhibitor. The chain is U11-theraphotoxin-Hhn1a from Cyriopagopus hainanus (Chinese bird spider).